A 137-amino-acid polypeptide reads, in one-letter code: Small ribosomal subunit protein bS18c (137 aa).

This sequence belongs to the bacterial ribosomal protein bS18 family. In terms of assembly, part of the 30S ribosomal subunit.

The protein resides in the plastid. Its subcellular location is the chloroplast. The sequence is that of Small ribosomal subunit protein bS18c (rps18) from Chlamydomonas reinhardtii (Chlamydomonas smithii).